A 217-amino-acid chain; its full sequence is MNLVLMGLPGAGKGTQAEKIVETYGIPHISTGDMFRAAMKEGTPLGLQAKEYIDRGDLVPDEVTIGIVRERLSKDDCQNGFLLDGFPRTVAQAEALEAMLAEIGRKLDYVIHIDVRQDVLMERLTGRRICRNCGATYHLVFHPPAQPGVCDKCGGELYQRPDDNEATVANRLEVNTKQMKPLLDFYEQKGYLRHINGEQEMEKVFSDIRELLGGLTR.

10–15 (GAGKGT) contributes to the ATP binding site. The tract at residues 30 to 59 (STGDMFRAAMKEGTPLGLQAKEYIDRGDLV) is NMP. Residues T31, R36, 57–59 (DLV), 85–88 (GFPR), and Q92 contribute to the AMP site. The interval 126 to 163 (GRRICRNCGATYHLVFHPPAQPGVCDKCGGELYQRPDD) is LID. Residue R127 participates in ATP binding. Zn(2+) contacts are provided by C130 and C133. 136–137 (TY) is an ATP binding site. Zn(2+)-binding residues include C150 and C153. R160 and R171 together coordinate AMP. Q199 lines the ATP pocket.

Belongs to the adenylate kinase family. As to quaternary structure, monomer.

The protein localises to the cytoplasm. The catalysed reaction is AMP + ATP = 2 ADP. It participates in purine metabolism; AMP biosynthesis via salvage pathway; AMP from ADP: step 1/1. Catalyzes the reversible transfer of the terminal phosphate group between ATP and AMP. Plays an important role in cellular energy homeostasis and in adenine nucleotide metabolism. The polypeptide is Adenylate kinase (Geobacillus thermodenitrificans (strain NG80-2)).